Reading from the N-terminus, the 421-residue chain is MKLVVVGLNHKSAPVSLREKVAYSSDTLPRSLQALTRLDAVHEGTILSTCNRVEIYMASRDPDAAAAQTSQWIARDHALDPADVTPHLYTKAESEAVRHGFCVASSLDSMVLGEAQILGQMKQAYQDALSAGSTGVVLNRFFQHAFLTAKRVRTETSIAENSVSVASAAVDLAKRIFGDLSGHSCLLIGAGEMCELAARHLVTHGVKEVLVTNRTFSRAVDLAQQFDGHAFPIEALAENLHRADIVISSTGSTVYMVGPDMVKQALKSRRQRPIFLIDIAVPRDLDPEIGQVDSAFLYDMDDLNKIVNDNRQDRAEAAQAAMQIIEGETPLFIQWLDTLDVVPTIKQMRRKAEAAKDQLLQKHLAGWDLSDTDRQRVENLARQLVNKLMHDPTERLRSLTNEHDGDRYIDAARKLYKLDDD.

Residues 49 to 52 (TCNR), S109, 114 to 116 (EAQ), and Q120 contribute to the substrate site. Residue C50 is the Nucleophile of the active site. Residue 189-194 (GAGEMC) participates in NADP(+) binding.

The protein belongs to the glutamyl-tRNA reductase family. In terms of assembly, homodimer.

It carries out the reaction (S)-4-amino-5-oxopentanoate + tRNA(Glu) + NADP(+) = L-glutamyl-tRNA(Glu) + NADPH + H(+). The protein operates within porphyrin-containing compound metabolism; protoporphyrin-IX biosynthesis; 5-aminolevulinate from L-glutamyl-tRNA(Glu): step 1/2. In terms of biological role, catalyzes the NADPH-dependent reduction of glutamyl-tRNA(Glu) to glutamate 1-semialdehyde (GSA). The polypeptide is Glutamyl-tRNA reductase (Magnetococcus marinus (strain ATCC BAA-1437 / JCM 17883 / MC-1)).